We begin with the raw amino-acid sequence, 310 residues long: L-lactate dehydrogenase (310 aa).

Residues 10-11 (MV), aspartate 32, tyrosine 62, and 76-77 (GV) each bind NAD(+). Substrate-binding positions include glutamine 79, arginine 85, and 117–120 (NPVD). NAD(+)-binding positions include 115–117 (ATN) and serine 140. 145 to 148 (DTAR) serves as a coordination point for substrate. Residues arginine 150 and histidine 165 each contribute to the beta-D-fructose 1,6-bisphosphate site. Histidine 172 acts as the Proton acceptor in catalysis. At tyrosine 218 the chain carries Phosphotyrosine. A substrate-binding site is contributed by threonine 227.

It belongs to the LDH/MDH superfamily. LDH family. As to quaternary structure, homotetramer.

It localises to the cytoplasm. The catalysed reaction is (S)-lactate + NAD(+) = pyruvate + NADH + H(+). The protein operates within fermentation; pyruvate fermentation to lactate; (S)-lactate from pyruvate: step 1/1. Allosterically activated by fructose 1,6-bisphosphate (FBP). Catalyzes the conversion of lactate to pyruvate. This Thermus thermophilus (strain ATCC 27634 / DSM 579 / HB8) protein is L-lactate dehydrogenase.